Reading from the N-terminus, the 209-residue chain is Superoxide dismutase [Mn/Fe] (209 aa).

Positions 38, 90, 172, and 176 each coordinate Fe(3+). Positions 38, 90, 172, and 176 each coordinate Mn(2+).

The protein belongs to the iron/manganese superoxide dismutase family. Mn(2+) is required as a cofactor. Fe(3+) serves as cofactor.

It catalyses the reaction 2 superoxide + 2 H(+) = H2O2 + O2. Destroys superoxide anion radicals which are normally produced within the cells and which are toxic to biological systems. Catalyzes the dismutation of superoxide anion radicals into O2 and H2O2 by successive reduction and oxidation of the transition metal ion at the active site. The sequence is that of Superoxide dismutase [Mn/Fe] (sodB) from Rickettsia conorii (strain ATCC VR-613 / Malish 7).